Here is an 816-residue protein sequence, read N- to C-terminus: Nicotine 6-hydroxylase large subunit (816 aa).

Glu745 is a binding site for Mo-molybdopterin cytosine dinucleotide.

This sequence belongs to the xanthine dehydrogenase family. As to quaternary structure, heterotrimer composed of a large subunit (NdhL), a medium subunit (NdhM) and a small subunit (NdhS). The cofactor is Mo-molybdopterin cytosine dinucleotide.

Its subcellular location is the cytoplasm. The catalysed reaction is (R)-nicotine + A + H2O = (R)-6-hydroxynicotine + AH2. The enzyme catalyses (S)-nicotine + A + H2O = (S)-6-hydroxynicotine + AH2. It participates in alkaloid degradation; nicotine degradation; 6-hydroxypseudooxynicotine from nicotine (R-isomer route): step 1/2. Its pathway is alkaloid degradation; nicotine degradation; 6-hydroxypseudooxynicotine from nicotine (S-isomer route): step 1/2. With respect to regulation, nicotine dehydrogenase activity is inhibited by tungsten. Its function is as follows. Component of the nicotine 6-hydroxylase, which is involved in the degradation of nicotine. Catalyzes the hydroxylation of the pyridine ring at C6 to form 6-hydroxynicotine. Can use both L-nicotine and D-nicotine. This is Nicotine 6-hydroxylase large subunit from Paenarthrobacter nicotinovorans (Arthrobacter nicotinovorans).